The sequence spans 150 residues: D-aminoacyl-tRNA deacylase (150 aa).

Positions 136–137 match the Gly-cisPro motif, important for rejection of L-amino acids motif; that stretch reads GP.

This sequence belongs to the DTD family. As to quaternary structure, homodimer.

The protein localises to the cytoplasm. It carries out the reaction glycyl-tRNA(Ala) + H2O = tRNA(Ala) + glycine + H(+). The catalysed reaction is a D-aminoacyl-tRNA + H2O = a tRNA + a D-alpha-amino acid + H(+). In terms of biological role, an aminoacyl-tRNA editing enzyme that deacylates mischarged D-aminoacyl-tRNAs. Also deacylates mischarged glycyl-tRNA(Ala), protecting cells against glycine mischarging by AlaRS. Acts via tRNA-based rather than protein-based catalysis; rejects L-amino acids rather than detecting D-amino acids in the active site. By recycling D-aminoacyl-tRNA to D-amino acids and free tRNA molecules, this enzyme counteracts the toxicity associated with the formation of D-aminoacyl-tRNA entities in vivo and helps enforce protein L-homochirality. The chain is D-aminoacyl-tRNA deacylase from Staphylococcus aureus (strain Mu50 / ATCC 700699).